The primary structure comprises 362 residues: GDSL esterase/lipase At5g22810 (362 aa).

Residues 1–28 (MGFSGIWLNLYVVFGSLMVFERMVVMVV) form the signal peptide. The active-site Nucleophile is serine 44. N-linked (GlcNAc...) asparagine glycans are attached at residues asparagine 159, asparagine 162, asparagine 264, and asparagine 329. Catalysis depends on residues aspartate 337 and histidine 340.

This sequence belongs to the 'GDSL' lipolytic enzyme family.

It is found in the secreted. The sequence is that of GDSL esterase/lipase At5g22810 from Arabidopsis thaliana (Mouse-ear cress).